The sequence spans 754 residues: Pentatricopeptide repeat-containing protein At3g53700, chloroplastic (754 aa).

Residues 1–72 (MAFSSCLKFY…DSAALRLFNL (72 aa)) constitute a chloroplast transit peptide. 17 PPR repeats span residues 82 to 116 (EPAL…RCEM), 117 to 152 (GTST…GLKP), 153 to 187 (DTHF…GIKP), 188 to 222 (DVST…GLVP), 223 to 257 (DEKT…GCSW), 258 to 288 (SNVS…MSNQ), 294 to 328 (DQYT…GYDP), 329 to 363 (DVYT…DCSP), 364 to 398 (NTVT…GILP), 399 to 433 (DVCT…GCEP), 434 to 468 (DEFT…GCAR), 469 to 503 (SVIT…GVSR), 504 to 538 (NSVT…GQKP), 539 to 573 (DKYT…GCEP), 574 to 608 (DIVT…GINL), 609 to 643 (TPHA…NEAP), and 645 to 680 (DAVS…GFVP).

It belongs to the PPR family. P subfamily.

The protein resides in the plastid. It localises to the chloroplast. Its function is as follows. May be involved in female gametophyte development. This is Pentatricopeptide repeat-containing protein At3g53700, chloroplastic (MEE40) from Arabidopsis thaliana (Mouse-ear cress).